The following is a 164-amino-acid chain: Protein-export protein SecB (164 aa).

This sequence belongs to the SecB family. Homotetramer, a dimer of dimers. One homotetramer interacts with 1 SecA dimer.

The protein resides in the cytoplasm. Functionally, one of the proteins required for the normal export of preproteins out of the cell cytoplasm. It is a molecular chaperone that binds to a subset of precursor proteins, maintaining them in a translocation-competent state. It also specifically binds to its receptor SecA. This is Protein-export protein SecB from Rhodopseudomonas palustris (strain BisB18).